We begin with the raw amino-acid sequence, 1171 residues long: Phytochrome B (1171 aa).

A compositionally biased stretch (low complexity) spans 1–19 (MASGSRATPTRSPSSARPA). Residues 1-53 (MASGSRATPTRSPSSARPAAPRHQHHHSQSSGGSTSRAGGGGGGGGGGGGGAA) are disordered. Over residues 38–52 (AGGGGGGGGGGGGGA) the composition is skewed to gly residues. In terms of domain architecture, GAF spans 259–442 (DVKLLCDTVV…AFGLQLNMEL (184 aa)). Cys-364 lines the phytochromobilin pocket. PAS domains lie at 661–732 (VARE…LRGD) and 795–866 (DYKA…MIVL). A Histidine kinase domain is found at 943–1161 (YIYQEIKNPL…FFHIVLELPQ (219 aa)).

Belongs to the phytochrome family. Homodimer. Post-translationally, contains one covalently linked phytochromobilin chromophore.

Regulatory photoreceptor which exists in two forms that are reversibly interconvertible by light: the Pr form that absorbs maximally in the red region of the spectrum and the Pfr form that absorbs maximally in the far-red region. Photoconversion of Pr to Pfr induces an array of morphogenic responses, whereas reconversion of Pfr to Pr cancels the induction of those responses. Pfr controls the expression of a number of nuclear genes including those encoding the small subunit of ribulose-bisphosphate carboxylase, chlorophyll A/B binding protein, protochlorophyllide reductase, rRNA, etc. It also controls the expression of its own gene(s) in a negative feedback fashion. The protein is Phytochrome B (PHYB) of Oryza sativa subsp. japonica (Rice).